We begin with the raw amino-acid sequence, 304 residues long: ATP synthase gamma chain (304 aa).

Belongs to the ATPase gamma chain family. As to quaternary structure, F-type ATPases have 2 components, CF(1) - the catalytic core - and CF(0) - the membrane proton channel. CF(1) has five subunits: alpha(3), beta(3), gamma(1), delta(1), epsilon(1). CF(0) has three main subunits: a, b and c.

Its subcellular location is the cell membrane. Produces ATP from ADP in the presence of a proton gradient across the membrane. The gamma chain is believed to be important in regulating ATPase activity and the flow of protons through the CF(0) complex. The protein is ATP synthase gamma chain of Thermobifida fusca (strain YX).